We begin with the raw amino-acid sequence, 282 residues long: Bis(5'-nucleosyl)-tetraphosphatase, symmetrical (282 aa).

The protein belongs to the Ap4A hydrolase family. In terms of assembly, monomer.

The catalysed reaction is P(1),P(4)-bis(5'-adenosyl) tetraphosphate + H2O = 2 ADP + 2 H(+). In terms of biological role, hydrolyzes diadenosine 5',5'''-P1,P4-tetraphosphate to yield ADP. This is Bis(5'-nucleosyl)-tetraphosphatase, symmetrical from Escherichia coli O157:H7.